The following is a 470-amino-acid chain: tRNA (guanine(37)-N(1))-methyltransferase (470 aa).

S-adenosyl-L-methionine-binding positions include 304-305, 332-333, and N370; these read DL and DG.

It belongs to the class I-like SAM-binding methyltransferase superfamily. TRM5/TYW2 family. As to quaternary structure, monomer.

It localises to the mitochondrion matrix. The protein localises to the nucleus. Its subcellular location is the cytoplasm. It carries out the reaction guanosine(37) in tRNA + S-adenosyl-L-methionine = N(1)-methylguanosine(37) in tRNA + S-adenosyl-L-homocysteine + H(+). Functionally, specifically methylates the N1 position of guanosine-37 in various cytoplasmic and mitochondrial tRNAs. Methylation is not dependent on the nature of the nucleoside 5' of the target nucleoside. This is the first step in the biosynthesis of wybutosine (yW), a modified base adjacent to the anticodon of tRNAs and required for accurate decoding. The protein is tRNA (guanine(37)-N(1))-methyltransferase of Theileria parva (East coast fever infection agent).